The chain runs to 311 residues: Avirulence protein ATR1 (311 aa).

The first 15 residues, 1 to 15, serve as a signal peptide directing secretion; that stretch reads MRVCYFVLVPSVALA. The short motif at 48–62 is the RxLR-dEER element; the sequence is RALRAQTALDDDEER. 2 WY domain regions span residues 127-209 and 210-311; these read DEAL…VKCV and ESED…IYSV.

Belongs to the RxLR effector family. Monomer. Interacts with defense protein RPP1 from several ecotypes including RPP1-NdA, RPP1-WsB, RPP1-EstA and RPP1-ZdrA, via their leucine-rich repeats (LLRs).

It localises to the secreted. The protein localises to the host cytoplasm. Functionally, secreted effector that acts as an elicitor of hypersensitive response (HR) specifically on plants carrying both defense protein RPP1 from several ecotypes including RPP1-NdA, RPP1-WsB, RPP1-EstA and RPP1-ZdrA. This Hyaloperonospora arabidopsidis (strain Emoy2) (Downy mildew agent) protein is Avirulence protein ATR1.